The primary structure comprises 335 residues: LIM and SH3 domain protein F42H10.3 (335 aa).

The 61-residue stretch at 5–65 folds into the LIM zinc-binding domain; sequence CAREDCGKTV…DPHYPKTVAS (61 aa). Nebulin repeat units follow at residues 66 to 97 and 98 to 132; these read VMAD…KMKG and TKIE…QKAR. Residues 128-142 are compositionally biased toward basic and acidic residues; that stretch reads DQKARQEEVRPKEEI. 2 disordered regions span residues 128-151 and 233-264; these read DQKA…PTPI and DFAG…ISPT. Residues 242 to 260 show a composition bias toward low complexity; it reads SNSISSTSPHSTLSSPQST. One can recognise an SH3 domain in the interval 266–327; the sequence is KAGFAVKAIY…PANYVQPHKL (62 aa).

This Caenorhabditis elegans protein is LIM and SH3 domain protein F42H10.3.